A 423-amino-acid polypeptide reads, in one-letter code: Core protease OPG083 (423 aa).

Catalysis depends on residues histidine 241, aspartate 248, and cysteine 328.

Belongs to the peptidase C57 family.

It is found in the virion. Late protein responsible for processing most or all of the viral core and membrane proteins known to undergo morphogenesis-associated proteolysis. These proteolytic events are involved in the transformation of immature virions (IV) into mature virions (MV). Probably cleaves at least the OPG129/A3, OPG136/A10, OPG098/L4, and OPG144/A17 precursors preferentially at Ala-Gly-|-Ala motifs. Also seems to process Ala-Gly-|-Ser and Ala-Gly-|-Thr motifs. The sequence is that of Core protease OPG083 (OPG083) from Bos taurus (Bovine).